An 88-amino-acid chain; its full sequence is Putative carnobacteriocin-BM1 immunity protein (88 aa).

Could impart immunity to carnobacteriocin-BM1 to naturally sensitive host strains. In Carnobacterium maltaromaticum (Carnobacterium piscicola), this protein is Putative carnobacteriocin-BM1 immunity protein.